The chain runs to 155 residues: Transcription antitermination protein NusB (155 aa).

This sequence belongs to the NusB family.

Involved in transcription antitermination. Required for transcription of ribosomal RNA (rRNA) genes. Binds specifically to the boxA antiterminator sequence of the ribosomal RNA (rrn) operons. The protein is Transcription antitermination protein NusB of Vibrio atlanticus (strain LGP32) (Vibrio splendidus (strain Mel32)).